Here is a 421-residue protein sequence, read N- to C-terminus: UDP-N-acetylglucosamine 1-carboxyvinyltransferase (421 aa).

22–23 (KN) contributes to the phosphoenolpyruvate binding site. R93 is a UDP-N-acetyl-alpha-D-glucosamine binding site. The Proton donor role is filled by C117. Residue C117 is modified to 2-(S-cysteinyl)pyruvic acid O-phosphothioketal. Residues 122 to 126 (RPVDL), D308, and I330 each bind UDP-N-acetyl-alpha-D-glucosamine.

It belongs to the EPSP synthase family. MurA subfamily.

Its subcellular location is the cytoplasm. The catalysed reaction is phosphoenolpyruvate + UDP-N-acetyl-alpha-D-glucosamine = UDP-N-acetyl-3-O-(1-carboxyvinyl)-alpha-D-glucosamine + phosphate. It functions in the pathway cell wall biogenesis; peptidoglycan biosynthesis. Its function is as follows. Cell wall formation. Adds enolpyruvyl to UDP-N-acetylglucosamine. This chain is UDP-N-acetylglucosamine 1-carboxyvinyltransferase, found in Pseudomonas fluorescens (strain Pf0-1).